The sequence spans 128 residues: Phosphoribosyl-AMP cyclohydrolase (128 aa).

Asp-89 is a Mg(2+) binding site. Zn(2+) is bound at residue Cys-90. 2 residues coordinate Mg(2+): Asp-91 and Asp-93. Residues Cys-106 and Cys-113 each contribute to the Zn(2+) site.

This sequence belongs to the PRA-CH family. Homodimer. The cofactor is Mg(2+). It depends on Zn(2+) as a cofactor.

The protein resides in the cytoplasm. The enzyme catalyses 1-(5-phospho-beta-D-ribosyl)-5'-AMP + H2O = 1-(5-phospho-beta-D-ribosyl)-5-[(5-phospho-beta-D-ribosylamino)methylideneamino]imidazole-4-carboxamide. The protein operates within amino-acid biosynthesis; L-histidine biosynthesis; L-histidine from 5-phospho-alpha-D-ribose 1-diphosphate: step 3/9. In terms of biological role, catalyzes the hydrolysis of the adenine ring of phosphoribosyl-AMP. The protein is Phosphoribosyl-AMP cyclohydrolase of Pyrobaculum calidifontis (strain DSM 21063 / JCM 11548 / VA1).